The primary structure comprises 353 residues: uncharacterized protein (353 aa).

The span at Ala-233 to Glu-245 shows a compositional bias: polar residues. Residues Ala-233–Asp-265 form a disordered region. Over residues Ser-252–Ser-263 the composition is skewed to low complexity.

This is an uncharacterized protein from Saccharomyces cerevisiae (strain ATCC 204508 / S288c) (Baker's yeast).